Reading from the N-terminus, the 2717-residue chain is Naringenin synthase (2717 aa).

Residues 13-422 (HHAVESRDKV…VGRKKELIIR (410 aa)) form an adenylation (A) domain region. The Carrier 1 domain maps to 531–617 (AAVEALVLAE…AVRDYLFNRL (87 aa)). O-(pantetheine 4'-phosphoryl)serine is present on S576. Residues 638–1066 (AEPIAIISMA…GTNAHIILEQ (429 aa)) enclose the Ketosynthase family 3 (KS3) domain. Active-site for beta-ketoacyl synthase activity residues include C810, H945, and H988. The 259-residue stretch at 1204-1462 (PIFSRAFKEA…GPSAVLSPHV (259 aa)) folds into the Malonyl-CoA:ACP transacylase (MAT) domain. The N-terminal hotdog fold stretch occupies residues 1549 to 1688 (HGVLYRTTSI…GTLKLISLPP (140 aa)). The region spanning 1549–1847 (HGVLYRTTSI…LRAVQPPVVE (299 aa)) is the PKS/mFAS DH domain. The segment at 1561–1842 (TNDIICAGFV…ISEVMLRAVQ (282 aa)) is dehydratase (DH) domain. H1581 serves as the catalytic Proton acceptor; for dehydratase activity. The C-terminal hotdog fold stretch occupies residues 1703-1847 (NSEVDVSKAY…LRAVQPPVVE (145 aa)). The Proton donor; for dehydratase activity role is filled by D1764. Residues 2008-2186 (GTVLITGGTG…AVSLAWGPWA (179 aa)) form the Ketoreductase (KR) domain. The region spanning 2277–2354 (SRSDTLLGLV…ALVQYLLDRI (78 aa)) is the Carrier 2 domain. S2313 carries the post-translational modification O-(pantetheine 4'-phosphoryl)serine. Over residues 2361–2373 (EIELDQDVAEEET) the composition is skewed to acidic residues. The tract at residues 2361–2412 (EIELDQDVAEEETVSGTNGHQNGHQNGTQNGHSNGHANGASTNGDATDGIDP) is disordered. Low complexity predominate over residues 2375-2396 (SGTNGHQNGHQNGTQNGHSNGH). The segment at 2497 to 2711 (SLSVYSAVAA…AIAVEIEHWA (215 aa)) is thioester reductase (TE) domain.

The protein in the N-terminal section; belongs to the NRP synthetase family. Pantetheine 4'-phosphate serves as cofactor.

In terms of biological role, PKS-NRPS hybrid synthetase that, alone, is sufficient to produce naringenin chalcone, the direct precursor of naringenin, by using p-coumaric acid (p-CA) or p-hydroxybenzoic acid (p-HBA) with the involvement of malonyl-CoA molecules. The adenylation (A) domain activates p-CA or p-HBA as adenylates, which are transferred to the thiol group of the pantetheinyl residue of the T domain, and further transferred to the adjacent PKS portion of fnsA. Besides p-CA and p-HBA, the A domain is also able to activate other substrates such as cinnamic acid and salicyclic acid. Within the PKS portion of fnsA, p-CA and p-HBA act as starter units for respectively three or four malonyl-CoA molecules for elongation by the AT and KS domains of fnsA. Afterwards, naringenin chalcone is cyclized through Claisen condensation and thereby released either spontaneously or catalyzed by the TE domain. Finally, naringenin chalcone is converted to naringenin spontaneously or by a chalcone isomerase. The protein is Naringenin synthase of Pestalotiopsis fici (strain W106-1 / CGMCC3.15140).